Consider the following 102-residue polypeptide: N(4)-acetylcytidine amidohydrolase (102 aa).

The ASCH domain maps to 6–93; it reads TFFSRFEQDI…IKEIYPGLDE (88 aa). The Proton acceptor role is filled by Lys-20. Thr-23 acts as the Nucleophile in catalysis. Catalysis depends on Glu-73, which acts as the Proton donor.

The protein belongs to the N(4)-acetylcytidine amidohydrolase family.

It carries out the reaction N(4)-acetylcytidine + H2O = cytidine + acetate + H(+). The catalysed reaction is N(4)-acetyl-2'-deoxycytidine + H2O = 2'-deoxycytidine + acetate + H(+). The enzyme catalyses N(4)-acetylcytosine + H2O = cytosine + acetate + H(+). In terms of biological role, catalyzes the hydrolysis of N(4)-acetylcytidine (ac4C). The polypeptide is N(4)-acetylcytidine amidohydrolase (Serratia proteamaculans (strain 568)).